Reading from the N-terminus, the 341-residue chain is S-adenosylmethionine:tRNA ribosyltransferase-isomerase (341 aa).

It belongs to the QueA family. In terms of assembly, monomer.

It localises to the cytoplasm. It carries out the reaction 7-aminomethyl-7-carbaguanosine(34) in tRNA + S-adenosyl-L-methionine = epoxyqueuosine(34) in tRNA + adenine + L-methionine + 2 H(+). Its pathway is tRNA modification; tRNA-queuosine biosynthesis. Its function is as follows. Transfers and isomerizes the ribose moiety from AdoMet to the 7-aminomethyl group of 7-deazaguanine (preQ1-tRNA) to give epoxyqueuosine (oQ-tRNA). This is S-adenosylmethionine:tRNA ribosyltransferase-isomerase from Staphylococcus epidermidis (strain ATCC 12228 / FDA PCI 1200).